Reading from the N-terminus, the 486-residue chain is Glutamate--tRNA ligase (486 aa).

The 'HIGH' region motif lies at 11–21; the sequence is PSPTGLLHIGN. A 'KMSKS' region motif is present at residues 255 to 259; the sequence is KLSKR. K258 lines the ATP pocket.

The protein belongs to the class-I aminoacyl-tRNA synthetase family. Glutamate--tRNA ligase type 1 subfamily. Monomer.

It localises to the cytoplasm. The catalysed reaction is tRNA(Glu) + L-glutamate + ATP = L-glutamyl-tRNA(Glu) + AMP + diphosphate. Catalyzes the attachment of glutamate to tRNA(Glu) in a two-step reaction: glutamate is first activated by ATP to form Glu-AMP and then transferred to the acceptor end of tRNA(Glu). In Streptococcus pneumoniae (strain Hungary19A-6), this protein is Glutamate--tRNA ligase.